A 569-amino-acid polypeptide reads, in one-letter code: Peroxisomal targeting signal receptor (569 aa).

A Glycyl cysteine thioester (Cys-Gly) (interchain with G-Cter in ubiquitin) cross-link involves residue Cys-9. The segment at Ala-10–Ser-32 is amphipathic helix 1 (AH1). Residue Lys-21 forms a Glycyl lysine isopeptide (Lys-Gly) (interchain with G-Cter in ubiquitin) linkage. The segment at Ser-23–Gln-42 is disordered. An amphipathic helix 2 (AH2) region spans residues Arg-57–Phe-72. Short sequence motifs (wxxxF/Y motif) lie at residues Trp-118–Phe-122 and Trp-183–Phe-187. The segment at Phe-218 to Leu-234 is amphipathic helix 4 (AH4). Residues Trp-243 to Phe-247 carry the WxxxF/Y motif 3 motif. TPR repeat units follow at residues Leu-272–His-305, Val-306–Asn-339, Leu-340–Arg-377, Ala-378–Asp-415, Ser-416–Asp-449, Ala-450–Phe-483, and Val-484–Glu-517.

It belongs to the peroxisomal targeting signal receptor family. Interacts (via WxxxF/Y and LVxEF motifs) with PEX14; promoting translocation through the PEX13-PEX14 docking complex. Monoubiquitinated at Cys-9 by PEX2 during PEX5 passage through the retrotranslocation channel: monoubiquitination acts as a signal for PEX5 extraction and is required for proper export from peroxisomes and recycling. When PEX5 recycling is compromised, polyubiquitinated at Lys-21 by PEX10 during its passage through the retrotranslocation channel, leading to its degradation.

The protein resides in the cytoplasm. It localises to the cytosol. The protein localises to the peroxisome matrix. In terms of biological role, receptor that mediates peroxisomal import of proteins containing a C-terminal PTS1-type tripeptide peroxisomal targeting signal (SKL-type). Binds to cargo proteins containing a PTS1 peroxisomal targeting signal in the cytosol, and translocates them into the peroxisome matrix by passing through the PEX13-PEX14 docking complex along with cargo proteins. PEX5 receptor is then retrotranslocated into the cytosol, leading to release of bound cargo in the peroxisome matrix, and reset for a subsequent peroxisome import cycle. The protein is Peroxisomal targeting signal receptor (PEX5) of Pichia angusta (Yeast).